A 406-amino-acid chain; its full sequence is Arginine deiminase (406 aa).

Residue Cys396 is the Amidino-cysteine intermediate of the active site.

This sequence belongs to the arginine deiminase family.

The protein localises to the cytoplasm. It carries out the reaction L-arginine + H2O = L-citrulline + NH4(+). Its pathway is amino-acid degradation; L-arginine degradation via ADI pathway; carbamoyl phosphate from L-arginine: step 1/2. This is Arginine deiminase from Vibrio vulnificus (strain CMCP6).